The sequence spans 122 residues: Large ribosomal subunit protein uL14 (122 aa).

It belongs to the universal ribosomal protein uL14 family. Part of the 50S ribosomal subunit. Forms a cluster with proteins L3 and L19. In the 70S ribosome, L14 and L19 interact and together make contacts with the 16S rRNA in bridges B5 and B8.

Functionally, binds to 23S rRNA. Forms part of two intersubunit bridges in the 70S ribosome. This Acinetobacter baumannii (strain SDF) protein is Large ribosomal subunit protein uL14.